Here is a 98-residue protein sequence, read N- to C-terminus: NADH-ubiquinone oxidoreductase chain 4L (98 aa).

3 helical membrane-spanning segments follow: residues 1-21, 29-49, and 61-81; these read MPII…GMLV, SLLC…LMAL, and IALL…LVSI.

This sequence belongs to the complex I subunit 4L family. In terms of assembly, core subunit of respiratory chain NADH dehydrogenase (Complex I) which is composed of 45 different subunits.

It localises to the mitochondrion inner membrane. It catalyses the reaction a ubiquinone + NADH + 5 H(+)(in) = a ubiquinol + NAD(+) + 4 H(+)(out). In terms of biological role, core subunit of the mitochondrial membrane respiratory chain NADH dehydrogenase (Complex I) which catalyzes electron transfer from NADH through the respiratory chain, using ubiquinone as an electron acceptor. Part of the enzyme membrane arm which is embedded in the lipid bilayer and involved in proton translocation. The protein is NADH-ubiquinone oxidoreductase chain 4L (MT-ND4L) of Piliocolobus badius (Western red colobus).